A 405-amino-acid polypeptide reads, in one-letter code: L-carnitine CoA-transferase (405 aa).

CoA is bound by residues lysine 97 and arginine 104. Aspartate 169 serves as the catalytic Nucleophile.

Belongs to the CoA-transferase III family. CaiB subfamily. Homodimer.

The protein resides in the cytoplasm. The enzyme catalyses crotonobetainyl-CoA + (R)-carnitine = crotonobetaine + (R)-carnitinyl-CoA. It catalyses the reaction 4-(trimethylamino)butanoyl-CoA + (R)-carnitine = (R)-carnitinyl-CoA + 4-(trimethylamino)butanoate. It participates in amine and polyamine metabolism; carnitine metabolism. Catalyzes the reversible transfer of the CoA moiety from gamma-butyrobetainyl-CoA to L-carnitine to generate L-carnitinyl-CoA and gamma-butyrobetaine. Is also able to catalyze the reversible transfer of the CoA moiety from gamma-butyrobetainyl-CoA or L-carnitinyl-CoA to crotonobetaine to generate crotonobetainyl-CoA. In Escherichia fergusonii (strain ATCC 35469 / DSM 13698 / CCUG 18766 / IAM 14443 / JCM 21226 / LMG 7866 / NBRC 102419 / NCTC 12128 / CDC 0568-73), this protein is L-carnitine CoA-transferase.